Reading from the N-terminus, the 146-residue chain is UPF0306 protein HD_1359 (146 aa).

This sequence belongs to the UPF0306 family.

The sequence is that of UPF0306 protein HD_1359 from Haemophilus ducreyi (strain 35000HP / ATCC 700724).